The following is a 148-amino-acid chain: Deoxyuridine 5'-triphosphate nucleotidohydrolase (148 aa).

Residues 68–70 (RSG), Asn-81, 85–87 (TID), and Lys-95 each bind substrate.

The protein belongs to the dUTPase family. Requires Mg(2+) as cofactor.

The enzyme catalyses dUTP + H2O = dUMP + diphosphate + H(+). It functions in the pathway pyrimidine metabolism; dUMP biosynthesis; dUMP from dCTP (dUTP route): step 2/2. Functionally, this enzyme is involved in nucleotide metabolism: it produces dUMP, the immediate precursor of thymidine nucleotides and it decreases the intracellular concentration of dUTP so that uracil cannot be incorporated into DNA. The protein is Deoxyuridine 5'-triphosphate nucleotidohydrolase of Rickettsia conorii (strain ATCC VR-613 / Malish 7).